Here is an 887-residue protein sequence, read N- to C-terminus: Alanine--tRNA ligase (887 aa).

Zn(2+)-binding residues include His-579, His-583, Cys-681, and His-685.

This sequence belongs to the class-II aminoacyl-tRNA synthetase family. The cofactor is Zn(2+).

The protein resides in the cytoplasm. The enzyme catalyses tRNA(Ala) + L-alanine + ATP = L-alanyl-tRNA(Ala) + AMP + diphosphate. Its function is as follows. Catalyzes the attachment of alanine to tRNA(Ala) in a two-step reaction: alanine is first activated by ATP to form Ala-AMP and then transferred to the acceptor end of tRNA(Ala). Also edits incorrectly charged Ser-tRNA(Ala) and Gly-tRNA(Ala) via its editing domain. In Flavobacterium psychrophilum (strain ATCC 49511 / DSM 21280 / CIP 103535 / JIP02/86), this protein is Alanine--tRNA ligase.